We begin with the raw amino-acid sequence, 923 residues long: Cell cycle and apoptosis regulator protein 2 (923 aa).

The tract at residues 1–35 (MSQFKRQRINPLPGGRNFSGTASTSLLGPPPGLLT) is disordered. Residue threonine 35 is modified to Phosphothreonine. Lysine 112 is modified (N6-acetyllysine; by KAT8). Lysine 123 carries the N6-methyllysine modification. Residue serine 124 is modified to Phosphoserine. Disordered stretches follow at residues 178–218 (LNRF…KKPR), 446–510 (KAAE…PAVI), and 568–643 (VSPP…SEDL). Arginine 180 is subject to Omega-N-methylarginine. The segment covering 188–200 (GRLDQGRSDDYDS) has biased composition (basic and acidic residues). Position 215 is an N6-acetyllysine; by KAT8 (lysine 215). A compositionally biased stretch (low complexity) spans 446–458 (KAAEAAPPTQEAQ). Phosphothreonine; by ATM, ATR and CK2 is present on threonine 454. Threonine 484 is subject to Phosphothreonine. Phosphoserine is present on serine 569. Positions 572–602 (EPEKEEAAKEEATKEEEAIKEEVVKEPKDEA) are enriched in basic and acidic residues. Lysine 591 participates in a covalent cross-link: Glycyl lysine isopeptide (Lys-Gly) (interchain with G-Cter in SUMO2 and SUMO3); alternate. Lysine 591 is covalently cross-linked (Glycyl lysine isopeptide (Lys-Gly) (interchain with G-Cter in SUMO2); alternate). Residues 610–670 (ESEAPLKEDG…EEFAGAKLED (61 aa)) are interaction with MCC. A phosphoserine mark is found at serine 627, serine 675, serine 678, serine 681, serine 687, and serine 808. The interval 704–923 (DCLLAFVFFD…VEKEEPAPSN (220 aa)) is interaction with NR1D1. A coiled-coil region spans residues 829-909 (LENKIHTLEL…QLEIQRVVEK (81 aa)). Phosphothreonine is present on threonine 897.

Component of the DBIRD complex. Interacts with ZNF326/ZIRD; the interaction is direct. Interacts (via N-terminus) with SIRT1, which inhibits the deacetylation of substrates. Interacts (via N-terminus) with SUV39H1; this interaction abolishes the interaction with SIRT1. Component of a nuclear receptor-mediated transcription complex composed of at least ZNF335, CCAR2 and EMSY; the complex stimulates the transcription of nuclear receptor target genes such as SOX9 and HOXA1. Within the complex interacts with EMSY and interacts with ZNF335 (via C-terminus). Components of this complex may associate with components of a histone methylation complex to form a complex at least composed of ZNF335, HCFC1, CCAR2, EMSY, MKI67, RBBP5, ASH2L and WDR5. Within this complex, interacts with ASH2L. Interacts with NR1D1. Interacts (via N-terminus) with ESR1 and ESR2. Interacts (via N-terminus) with HDAC3 (via C-terminus). Interacts with HDAC1 and MED2F. Interacts with MCC. Interacts (via N-terminus) with NR1H2 and NR1H3 in a ligand-independent manner. Interacts with CSNK2A1. Interacts (via N-terminus) with p53/TP53. Interacts (via N-terminus) with BRCA1 (via the BRCT domains). Interacts (via N-terminus) with CHEK2 (via protein kinase domain). Interacts with PSEM3. Interacts (via N-terminus) with PSIA3 and SENP1. The sumoylated form shows a preferential interaction with SIRT1 as compared to its unmodified form. Interacts with CECR2; may form part of the CERF-1 and/or CEF-5 ISWI chromatin remodeling complexes in embryonic stem cells. Post-translationally, ATM/ATR-mediated phosphorylation at Thr-454 upon DNA damage promotes binding to SIRT1. Phosphorylation at Thr-454 promotes its sumoylation by switching the binding partner of CCAR2 from SENP1 to PIAS3. In terms of processing, acetylation at Lys-112 and Lys-215 by KAT8 prevents inhibitory binding to SIRT1 and increases its deacetylase activity. Genotoxic stress induces its sumoylation and sumoylation promotes the SIRT1-CCAR2 interaction which in turn inhibits SIRT1-mediated deacetylation of p53/TP53. Sumoylation leads to transcriptional activation of p53/TP53 by sequestering SIRT1 from p53/TP53. Desumoylated by SENP1. As to expression, expressed in gastric carcinoma tissue and the expression gradually increases with the progression of the carcinoma (at protein level). Expressed ubiquitously in normal tissues. Expressed in 84 to 100% of neoplastic breast, lung, and colon tissues.

It localises to the nucleus. The protein resides in the cytoplasm. The protein localises to the cytoskeleton. Its subcellular location is the spindle. Its function is as follows. Core component of the DBIRD complex, a multiprotein complex that acts at the interface between core mRNP particles and RNA polymerase II (RNAPII) and integrates transcript elongation with the regulation of alternative splicing: the DBIRD complex affects local transcript elongation rates and alternative splicing of a large set of exons embedded in (A + T)-rich DNA regions. Inhibits SIRT1 deacetylase activity leading to increasing levels of p53/TP53 acetylation and p53-mediated apoptosis. Inhibits SUV39H1 methyltransferase activity. Mediates ligand-dependent transcriptional activation by nuclear hormone receptors. Plays a critical role in maintaining genomic stability and cellular integrity following UV-induced genotoxic stress. Regulates the circadian expression of the core clock components NR1D1 and BMAL1. Enhances the transcriptional repressor activity of NR1D1 through stabilization of NR1D1 protein levels by preventing its ubiquitination and subsequent degradation. Represses the ligand-dependent transcriptional activation function of ESR2. Acts as a regulator of PCK1 expression and gluconeogenesis by a mechanism that involves, at least in part, both NR1D1 and SIRT1. Negatively regulates the deacetylase activity of HDAC3 and can alter its subcellular localization. Positively regulates the beta-catenin pathway (canonical Wnt signaling pathway) and is required for MCC-mediated repression of the beta-catenin pathway. Represses ligand-dependent transcriptional activation function of NR1H2 and NR1H3 and inhibits the interaction of SIRT1 with NR1H3. Plays an important role in tumor suppression through p53/TP53 regulation; stabilizes p53/TP53 by affecting its interaction with ubiquitin ligase MDM2. Represses the transcriptional activator activity of BRCA1. Inhibits SIRT1 in a CHEK2 and PSEM3-dependent manner and inhibits the activity of CHEK2 in vitro. The sequence is that of Cell cycle and apoptosis regulator protein 2 (CCAR2) from Homo sapiens (Human).